We begin with the raw amino-acid sequence, 458 residues long: UDP-N-acetylglucosamine 1-carboxyvinyltransferase (458 aa).

34-35 (KN) contributes to the phosphoenolpyruvate binding site. A UDP-N-acetyl-alpha-D-glucosamine-binding site is contributed by arginine 104. Cysteine 128 acts as the Proton donor in catalysis. Cysteine 128 bears the 2-(S-cysteinyl)pyruvic acid O-phosphothioketal mark. UDP-N-acetyl-alpha-D-glucosamine-binding residues include aspartate 320 and valine 342.

The protein belongs to the EPSP synthase family. MurA subfamily.

It is found in the cytoplasm. It catalyses the reaction phosphoenolpyruvate + UDP-N-acetyl-alpha-D-glucosamine = UDP-N-acetyl-3-O-(1-carboxyvinyl)-alpha-D-glucosamine + phosphate. It participates in cell wall biogenesis; peptidoglycan biosynthesis. Functionally, cell wall formation. Adds enolpyruvyl to UDP-N-acetylglucosamine. The polypeptide is UDP-N-acetylglucosamine 1-carboxyvinyltransferase (Prochlorococcus marinus (strain NATL1A)).